The chain runs to 258 residues: Deoxyribose-phosphate aldolase 2 (258 aa).

Aspartate 102 serves as the catalytic Proton donor/acceptor. Residue lysine 165 is the Schiff-base intermediate with acetaldehyde of the active site. The active-site Proton donor/acceptor is the lysine 199.

This sequence belongs to the DeoC/FbaB aldolase family. DeoC type 2 subfamily.

Its subcellular location is the cytoplasm. It carries out the reaction 2-deoxy-D-ribose 5-phosphate = D-glyceraldehyde 3-phosphate + acetaldehyde. The protein operates within carbohydrate degradation; 2-deoxy-D-ribose 1-phosphate degradation; D-glyceraldehyde 3-phosphate and acetaldehyde from 2-deoxy-alpha-D-ribose 1-phosphate: step 2/2. Catalyzes a reversible aldol reaction between acetaldehyde and D-glyceraldehyde 3-phosphate to generate 2-deoxy-D-ribose 5-phosphate. The protein is Deoxyribose-phosphate aldolase 2 (deoC2) of Vibrio vulnificus (strain YJ016).